The following is a 190-amino-acid chain: Holliday junction branch migration complex subunit RuvA (190 aa).

A domain I region spans residues 1–64 (MIGSLTGIIE…DNLTQLYGFL (64 aa)). Residues 65 to 142 (DKQEQDYMRM…KMPIEETLII (78 aa)) form a domain II region. Position 143 (K143) is a region of interest, flexible linker. Residues 143 to 190 (KEDDSLAALISLGYDKLKAFNAIQEIKANFPDDSIQEIIRKALQKLSQ) form a domain III region.

It belongs to the RuvA family. As to quaternary structure, homotetramer. Forms an RuvA(8)-RuvB(12)-Holliday junction (HJ) complex. HJ DNA is sandwiched between 2 RuvA tetramers; dsDNA enters through RuvA and exits via RuvB. An RuvB hexamer assembles on each DNA strand where it exits the tetramer. Each RuvB hexamer is contacted by two RuvA subunits (via domain III) on 2 adjacent RuvB subunits; this complex drives branch migration. In the full resolvosome a probable DNA-RuvA(4)-RuvB(12)-RuvC(2) complex forms which resolves the HJ.

Its subcellular location is the cytoplasm. Its function is as follows. The RuvA-RuvB-RuvC complex processes Holliday junction (HJ) DNA during genetic recombination and DNA repair, while the RuvA-RuvB complex plays an important role in the rescue of blocked DNA replication forks via replication fork reversal (RFR). RuvA specifically binds to HJ cruciform DNA, conferring on it an open structure. The RuvB hexamer acts as an ATP-dependent pump, pulling dsDNA into and through the RuvAB complex. HJ branch migration allows RuvC to scan DNA until it finds its consensus sequence, where it cleaves and resolves the cruciform DNA. The polypeptide is Holliday junction branch migration complex subunit RuvA (Ehrlichia chaffeensis (strain ATCC CRL-10679 / Arkansas)).